We begin with the raw amino-acid sequence, 62 residues long: Photosystem II reaction center protein Z (62 aa).

2 consecutive transmembrane segments (helical) span residues 8 to 28 (AVFALIATSSILLISVPVVFA) and 41 to 61 (FSGTSLWITLVFLVGILNSLI).

It belongs to the PsbZ family. In terms of assembly, PSII is composed of 1 copy each of membrane proteins PsbA, PsbB, PsbC, PsbD, PsbE, PsbF, PsbH, PsbI, PsbJ, PsbK, PsbL, PsbM, PsbT, PsbY, PsbZ, Psb30/Ycf12, at least 3 peripheral proteins of the oxygen-evolving complex and a large number of cofactors. It forms dimeric complexes.

It is found in the plastid. Its subcellular location is the chloroplast thylakoid membrane. In terms of biological role, may control the interaction of photosystem II (PSII) cores with the light-harvesting antenna, regulates electron flow through the 2 photosystem reaction centers. PSII is a light-driven water plastoquinone oxidoreductase, using light energy to abstract electrons from H(2)O, generating a proton gradient subsequently used for ATP formation. The polypeptide is Photosystem II reaction center protein Z (Morus indica (Mulberry)).